Consider the following 421-residue polypeptide: Alpha-1-antitrypsin-related protein (421 aa).

A signal peptide spans 1-21 (MPFSVSWGILLLAGLCCLVPS). Asn56, Asn110, Asn148, and Asn274 each carry an N-linked (GlcNAc...) asparagine glycan.

Belongs to the serpin family. Interacts with CANX and PDIA3. Post-translationally, glycosylated. As to expression, expressed in the liver, leukocytes and testis. Also detected in brain, colon, uterus, esophagus, spleen, trachea, kidney and lung.

Its subcellular location is the endoplasmic reticulum. Its function is as follows. Putative serine protease inhibitor. This Homo sapiens (Human) protein is Alpha-1-antitrypsin-related protein (SERPINA2).